Reading from the N-terminus, the 234-residue chain is Multicopy suppressor of SEC21 protein 27 (234 aa).

Residues Met-1–Arg-47 lie on the Cytoplasmic side of the membrane. Thr-3 carries the phosphothreonine modification. Residues Tyr-48 to Phe-68 traverse the membrane as a helical segment. At Asn-69–Glu-72 the chain is on the extracellular side. A helical transmembrane segment spans residues Ala-73 to Leu-93. Residues Gly-94 to Glu-234 lie on the Cytoplasmic side of the membrane. A COPI binding region spans residues Lys-231–Glu-234.

The protein belongs to the DUP/COS family. In terms of assembly, interacts with MST28. Binds to coatomer proteins of COPI and SEC23/SEC24 of COPII coated vesicles.

It localises to the endoplasmic reticulum. Its subcellular location is the golgi apparatus. It is found in the cytoplasmic vesicle. The protein localises to the COPI-coated vesicle membrane. The protein resides in the COPII-coated vesicle membrane. Its function is as follows. Involved in protein trafficking vesicle formation, probably by stabilizing of coatomer at the Golgi membrane and thus allowing the efficient formation of COPI coated vesicles. The sequence is that of Multicopy suppressor of SEC21 protein 27 (MST27) from Saccharomyces cerevisiae (strain ATCC 204508 / S288c) (Baker's yeast).